Here is a 172-residue protein sequence, read N- to C-terminus: Inorganic pyrophosphatase (172 aa).

Substrate-binding residues include lysine 28, arginine 42, and tyrosine 54. The Mg(2+) site is built by aspartate 64, aspartate 69, and aspartate 101. Tyrosine 140 contributes to the substrate binding site.

The protein belongs to the PPase family. In terms of assembly, homohexamer. Requires Mg(2+) as cofactor.

The protein localises to the cytoplasm. The enzyme catalyses diphosphate + H2O = 2 phosphate + H(+). Catalyzes the hydrolysis of inorganic pyrophosphate (PPi) forming two phosphate ions. The sequence is that of Inorganic pyrophosphatase from Campylobacter jejuni subsp. jejuni serotype O:2 (strain ATCC 700819 / NCTC 11168).